The following is a 324-amino-acid chain: Olfactory receptor 1L3 (324 aa).

At 1–25 the chain is on the extracellular side; it reads MGMSNLTRLSEFILLGLSSRSEDQR. Asn-5 carries an N-linked (GlcNAc...) asparagine glycan. A helical membrane pass occupies residues 26–49; that stretch reads PLFALFLIIYLVTLMGNLLIILAI. The Cytoplasmic segment spans residues 50 to 57; it reads HSDPRLQN. Residues 58–79 form a helical membrane-spanning segment; that stretch reads PMYFFLSILSFADICYTTVIVP. Residues 80 to 100 lie on the Extracellular side of the membrane; it reads KMLVNFLSEKKTISYAECLAQ. A disulfide bridge links Cys-97 with Cys-189. A helical transmembrane segment spans residues 101 to 120; sequence MYFFLVFGNIDSYLLAAMAI. Residues 121 to 139 are Cytoplasmic-facing; sequence NRCVAICNPFHYVTVMNRR. The chain crosses the membrane as a helical span at residues 140–158; the sequence is CCVLLLAFPITFSYFHSLL. Topologically, residues 159–196 are extracellular; that stretch reads HVLLVNRLTFCTSNVIHHFFCDVNPVLKLSCSSTFVNE. A helical membrane pass occupies residues 197–219; that stretch reads IVAMTEGLASVMAPFVCIIISYL. At 220–236 the chain is on the cytoplasmic side; that stretch reads RILIAVLKIPSAAGKHK. A helical membrane pass occupies residues 237–259; the sequence is AFSTCSSHLTVVILFYGSISYVY. At 260–271 the chain is on the extracellular side; that stretch reads LQPLSSYTVKDR. A helical transmembrane segment spans residues 272–291; it reads IATINYTVLTSVLNPFIYSL. Residues 292-324 lie on the Cytoplasmic side of the membrane; that stretch reads RNKDMKRGLQKLINKIKSQMSRFSTKTNKICGP.

Belongs to the G-protein coupled receptor 1 family.

It localises to the cell membrane. Its function is as follows. Odorant receptor. This is Olfactory receptor 1L3 (OR1L3) from Homo sapiens (Human).